Consider the following 346-residue polypeptide: Probable aldo-keto reductase 2 (346 aa).

The active-site Proton donor is tyrosine 63. Residue histidine 131 coordinates substrate. An NADP(+)-binding site is contributed by 210–220 (SPLGRGFLAAG).

The protein belongs to the aldo/keto reductase family. Aldo/keto reductase 13 subfamily.

The protein is Probable aldo-keto reductase 2 (AGD2) of Arabidopsis thaliana (Mouse-ear cress).